The sequence spans 996 residues: Disabled homolog 2-interacting protein (996 aa).

The C2 domain maps to 1-118 (MENLRRAVHP…AGRQFVEKWY (118 aa)). One can recognise a Ras-GAP domain in the interval 194–402 (GKVKDFLTDL…TNMQRFLLEI (209 aa)). The interval 453-750 (LRDVHTALST…RTPPTMLSTL (298 aa)) is necessary for interaction with AKT1. Residues 460–475 (LSTPGSGQLPGTNDLA) show a composition bias toward polar residues. Disordered regions lie at residues 460 to 486 (LSTP…SSVS) and 522 to 545 (RSSG…PDLQ). Residues 476-486 (STPGSGSSSVS) are compositionally biased toward low complexity. Residues 522 to 538 (RSSGVQPSPARSSSYSE) are compositionally biased toward polar residues. Serine 535 carries the phosphoserine; by MAP3K5 and RIPK1 modification. A Phosphoserine modification is found at serine 554. Disordered regions lie at residues 611 to 630 (VPTP…PQLL), 650 to 672 (PRGL…NSEE), 702 to 805 (SLTE…SPNA), 822 to 841 (EDEG…SKEE), and 971 to 996 (RNGV…SSNC). Over residues 659-672 (EGHSSLSSHSNSEE) the composition is skewed to low complexity. The segment covering 726–738 (QPPPPPPPPPPAP) has biased composition (pro residues). Composition is skewed to polar residues over residues 746-762 (MLST…TLAS) and 774-783 (LRQQSSSSKG). Residues serine 785 and serine 802 each carry the phosphoserine modification. Basic and acidic residues predominate over residues 830 to 841 (PPHRDRLRSKEE). The stretch at 832 to 966 (HRDRLRSKEE…SALTQLKERY (135 aa)) forms a coiled coil. The segment covering 974–996 (VSPTNPTKLQITENGEFRNSSNC) has biased composition (polar residues).

As to quaternary structure, on plasma membrane, exists in an inactive form complexed with TNFR1; in response to TNF-alpha, dissociates from TNFR1 complex, translocates to cytoplasm and forms part of an intracellular signaling complex comprising TRADD, RIPK1, TRAF2 and MAP3K5. Interacts (via NPXY motif) with DAB2 (via PID domain). Interacts (via PH domain) with ERN1. Part of a cytoplasmic complex made of HIPK1, DAB2IP and MAP3K5 in response to TNF-alpha; this complex formation promotes MAP3K5-JNK activation and subsequent apoptosis. Interacts (via N-terminal domain) with JAK2; the interaction occurs in a IFNG/IFN-gamma-dependent manner and inhibits JAK2 autophosphorylation activity. Interacts (via C2 domain) with GSK3B; the interaction stimulates GSK3B kinase activation. Interacts (via C2 domain) with PPP2CA. Interacts (via proline-rich motif) with a regulatory p85 subunit (via SH3 domain) of the PI3K complex; the interaction inhibits the PI3K-AKT complex activity in a TNF-alpha-dependent manner in prostate cancer (PCa) cells. Interacts with AKT1; the interaction is increased in a TNF-alpha-induced manner. Interacts (via C2 domain and active form preferentially) with KDR/VEGFR2 (tyrosine-phosphorylated active form preferentially); the interaction occurs at the late phase of VEGFA response and inhibits KDR/VEGFR2 activity. Interacts (via N-terminus C2 domain) with MAP3K5 ('Ser-966' dephosphorylated form preferentially); the interaction occurs in a TNF-alpha-induced manner. Interacts (via Ras-GAP domain) with the catalytic subunit of protein phosphatase PP2A; the interaction occurs in resting endothelial cells, is further enhanced by TNF-alpha stimulation and is required to bridge PP2A to MAP3K5. Interacts (via C-terminus PER domain) with TRAF2 (via zinc fingers); the interaction occurs in a TNF-alpha-dependent manner. Interacts with 14-3-3 proteins; the interaction occurs in a TNF-alpha-dependent manner. Interacts (via Ras-GAP domain) with RIPK1 (via kinase domain); the interaction occurs in a TNF-alpha-dependent manner. Interacts with DAB1 and DAB2. Interacts with RAB40C; acts as a GAP for RAB40C. In response to TNF-alpha-induction, phosphorylated at Ser-535; phosphorylation leads to a conformational change, and thus, increases its association with 14-3-3 proteins, MAP3K5, RIPK1 and TRAF2 in endothelial cells; also stimulates regulatory p85 subunit sequestring and PI3K-p85 complex activity inhibition. In terms of tissue distribution, expressed in brain, lung, thymus, bladder and skeletal muscle. Up-regulatedd during prostate degeneration.

The protein localises to the cytoplasm. It localises to the cell membrane. The protein resides in the membrane. It is found in the cell projection. Its subcellular location is the dendrite. Its function is as follows. Functions as a scaffold protein implicated in the regulation of a large spectrum of both general and specialized signaling pathways. Involved in several processes such as innate immune response, inflammation and cell growth inhibition, apoptosis, cell survival, angiogenesis, cell migration and maturation. Also plays a role in cell cycle checkpoint control; reduces G1 phase cyclin levels resulting in G0/G1 cell cycle arrest. Mediates signal transduction by receptor-mediated inflammatory signals, such as the tumor necrosis factor (TNF), interferon (IFN) or lipopolysaccharide (LPS). Modulates the balance between phosphatidylinositol 3-kinase (PI3K)-AKT-mediated cell survival and apoptosis stimulated kinase (MAP3K5)-JNK signaling pathways; sequesters both AKT1 and MAP3K5 and counterbalances the activity of each kinase by modulating their phosphorylation status in response to pro-inflammatory stimuli. Acts as a regulator of the endoplasmic reticulum (ER) unfolded protein response (UPR) pathway; specifically involved in transduction of the ER stress-response to the JNK cascade through ERN1. Mediates TNF-alpha-induced apoptosis activation by facilitating dissociation of inhibitor 14-3-3 from MAP3K5; recruits the PP2A phosphatase complex which dephosphorylates MAP3K5 on 'Ser-966', leading to the dissociation of 13-3-3 proteins and activation of the MAP3K5-JNK signaling pathway in endothelial cells. Acts a negative regulator in the IFN-gamma-mediated JAK-STAT signaling cascade by inhibiting smooth muscle cell (VSMCs) proliferation and intimal expansion, and thus, prevents graft arteriosclerosis (GA). Acts as a GTPase-activating protein (GAP) for the ADP ribosylation factor 6 (ARF6). Promotes hydrolysis of the ARF6-bound GTP and thus, negatively regulates phosphatidylinositol 4,5-bisphosphate (PIP2)-dependent TLR4-TIRAP-MyD88 and NF-kappa-B signaling pathways in endothelial cells in response to lipopolysaccharides (LPS). Binds specifically to phosphatidylinositol 4-phosphate (PtdIns4P) and phosphatidylinositol 3-phosphate (PtdIns3P). In response to vascular endothelial growth factor (VEGFA), acts as a negative regulator of the VEGFR2-PI3K-mediated angiogenic signaling pathway by inhibiting endothelial cell migration and tube formation. In the developing brain, promotes both the transition from the multipolar to the bipolar stage and the radial migration of cortical neurons from the ventricular zone toward the superficial layer of the neocortex in a glial-dependent locomotion process. Probable downstream effector of the Reelin signaling pathway; promotes Purkinje cell (PC) dendrites development and formation of cerebellar synapses. Also functions as a tumor suppressor protein in prostate cancer progression; prevents cell proliferation and epithelial-to-mesenchymal transition (EMT) through activation of the glycogen synthase kinase-3 beta (GSK3B)-induced beta-catenin and inhibition of PI3K-AKT and Ras-MAPK survival downstream signaling cascades, respectively. Mediates TNF/TRAF2-induced MAP3K5-JNK activation, while it inhibits CHUK-NF-kappa-B signaling. Functions as a Ras GTPase-activating protein. May act as a tumor suppressor gene. In Rattus norvegicus (Rat), this protein is Disabled homolog 2-interacting protein (Dab2ip).